The sequence spans 276 residues: Large ribosomal subunit protein uL2 (276 aa).

The tract at residues 224-254 is disordered; the sequence is VMNPVDHPHGGGEGRTSGGRHPVTPWGVPTK.

It belongs to the universal ribosomal protein uL2 family. As to quaternary structure, part of the 50S ribosomal subunit. Forms a bridge to the 30S subunit in the 70S ribosome.

In terms of biological role, one of the primary rRNA binding proteins. Required for association of the 30S and 50S subunits to form the 70S ribosome, for tRNA binding and peptide bond formation. It has been suggested to have peptidyltransferase activity; this is somewhat controversial. Makes several contacts with the 16S rRNA in the 70S ribosome. The polypeptide is Large ribosomal subunit protein uL2 (Gluconobacter oxydans (strain 621H) (Gluconobacter suboxydans)).